Consider the following 859-residue polypeptide: Ubiquitin carboxyl-terminal hydrolase 23 (859 aa).

Polar residues predominate over residues methionine 1–glycine 24. Positions methionine 1–cysteine 26 are disordered. Residues alanine 107–aspartate 410 enclose the USP domain. Cysteine 116 (nucleophile) is an active-site residue. Histidine 369 functions as the Proton acceptor in the catalytic mechanism. 2 disordered regions span residues methionine 722 to asparagine 749 and glutamate 822 to isoleucine 859.

The protein belongs to the peptidase C19 family.

The enzyme catalyses Thiol-dependent hydrolysis of ester, thioester, amide, peptide and isopeptide bonds formed by the C-terminal Gly of ubiquitin (a 76-residue protein attached to proteins as an intracellular targeting signal).. In terms of biological role, recognizes and hydrolyzes the peptide bond at the C-terminal Gly of ubiquitin. Involved in the processing of poly-ubiquitin precursors as well as that of ubiquitinated proteins. This Arabidopsis thaliana (Mouse-ear cress) protein is Ubiquitin carboxyl-terminal hydrolase 23 (UBP23).